The chain runs to 876 residues: GRB2-associated and regulator of MAPK protein (876 aa).

Residues Lys-9–Asp-318 are CABIT. Phosphotyrosine is present on Tyr-451. Disordered regions lie at residues Ser-460–Tyr-569 and Asp-708–Pro-741. The segment covering Val-461–Ser-471 has biased composition (polar residues). The segment covering Pro-532–Pro-549 has biased composition (pro residues). The segment covering Val-556 to Tyr-569 has biased composition (polar residues). The SAM domain maps to Leu-811 to Met-876.

Belongs to the GAREM family.

In terms of biological role, adapter protein that may provide a link between cell surface epidermal growth factor receptor and the MAPK/ERK signaling pathway. May promote cell proliferation. In Xenopus laevis (African clawed frog), this protein is GRB2-associated and regulator of MAPK protein (garem1).